Reading from the N-terminus, the 145-residue chain is Acidic phospholipase A2 (145 aa).

Positions 1–21 (MYPAHLLVLLAVCVSLLGAAS) are cleaved as a signal peptide. The propeptide occupies 22–27 (IPPLPL). Disulfide bonds link cysteine 38-cysteine 98, cysteine 54-cysteine 144, cysteine 56-cysteine 72, cysteine 71-cysteine 125, cysteine 78-cysteine 118, cysteine 87-cysteine 111, and cysteine 105-cysteine 116. Ca(2+)-binding residues include tyrosine 55 and glycine 57. Residue histidine 75 is part of the active site. Aspartate 76 provides a ligand contact to Ca(2+). Residue aspartate 119 is part of the active site.

It belongs to the phospholipase A2 family. Group I subfamily. D49 sub-subfamily. Ca(2+) serves as cofactor. As to expression, expressed by the venom gland.

The protein localises to the secreted. It catalyses the reaction a 1,2-diacyl-sn-glycero-3-phosphocholine + H2O = a 1-acyl-sn-glycero-3-phosphocholine + a fatty acid + H(+). Its function is as follows. PLA2 catalyzes the calcium-dependent hydrolysis of the 2-acyl groups in 3-sn-phosphoglycerides. The protein is Acidic phospholipase A2 of Notechis scutatus scutatus (Mainland tiger snake).